Reading from the N-terminus, the 72-residue chain is Cytochrome c oxidase subunit 2 (72 aa).

The Mitochondrial intermembrane portion of the chain corresponds to 1–14 (MAHPSQLGFQDAAS). A helical membrane pass occupies residues 15–45 (PVMEELLHFHDHALMIVFLISTLVLYIIVAM). The Mitochondrial matrix portion of the chain corresponds to 46–72 (VSTKLTNKHILDSQEVEIVWTILPAVI).

This sequence belongs to the cytochrome c oxidase subunit 2 family. Component of the cytochrome c oxidase (complex IV, CIV), a multisubunit enzyme composed of 14 subunits. The complex is composed of a catalytic core of 3 subunits MT-CO1, MT-CO2 and MT-CO3, encoded in the mitochondrial DNA, and 11 supernumerary subunits COX4I, COX5A, COX5B, COX6A, COX6B, COX6C, COX7A, COX7B, COX7C, COX8 and NDUFA4, which are encoded in the nuclear genome. The complex exists as a monomer or a dimer and forms supercomplexes (SCs) in the inner mitochondrial membrane with NADH-ubiquinone oxidoreductase (complex I, CI) and ubiquinol-cytochrome c oxidoreductase (cytochrome b-c1 complex, complex III, CIII), resulting in different assemblies (supercomplex SCI(1)III(2)IV(1) and megacomplex MCI(2)III(2)IV(2)). Found in a complex with TMEM177, COA6, COX18, COX20, SCO1 and SCO2. Interacts with TMEM177 in a COX20-dependent manner. Interacts with COX20. Interacts with COX16. It depends on Cu cation as a cofactor.

The protein resides in the mitochondrion inner membrane. The enzyme catalyses 4 Fe(II)-[cytochrome c] + O2 + 8 H(+)(in) = 4 Fe(III)-[cytochrome c] + 2 H2O + 4 H(+)(out). Component of the cytochrome c oxidase, the last enzyme in the mitochondrial electron transport chain which drives oxidative phosphorylation. The respiratory chain contains 3 multisubunit complexes succinate dehydrogenase (complex II, CII), ubiquinol-cytochrome c oxidoreductase (cytochrome b-c1 complex, complex III, CIII) and cytochrome c oxidase (complex IV, CIV), that cooperate to transfer electrons derived from NADH and succinate to molecular oxygen, creating an electrochemical gradient over the inner membrane that drives transmembrane transport and the ATP synthase. Cytochrome c oxidase is the component of the respiratory chain that catalyzes the reduction of oxygen to water. Electrons originating from reduced cytochrome c in the intermembrane space (IMS) are transferred via the dinuclear copper A center (CU(A)) of subunit 2 and heme A of subunit 1 to the active site in subunit 1, a binuclear center (BNC) formed by heme A3 and copper B (CU(B)). The BNC reduces molecular oxygen to 2 water molecules using 4 electrons from cytochrome c in the IMS and 4 protons from the mitochondrial matrix. In Atractosteus spatula (Alligator gar), this protein is Cytochrome c oxidase subunit 2 (mt-co2).